A 303-amino-acid chain; its full sequence is Exosome complex component RRP4 homolog (303 aa).

Residues 175 to 213 form the KH domain; it reads GILIKVPPHLIKKSKKHFHTLPYGMAVIIGCNGSVWVTP.

Belongs to the RRP4 family. As to quaternary structure, component of the RNA exosome complex. As to expression, ubiquitously expressed.

Its subcellular location is the nucleus. The protein resides in the nucleolus. The protein localises to the nucleoplasm. Its function is as follows. Non-catalytic component of the RNA exosome complex which has 3'-&gt;5' exoribonuclease activity and participates in a multitude of cellular RNA processing and degradation events. Involved in regulation of antisense ribosomal siRNA production. Involved in response to cold-warm shock. The chain is Exosome complex component RRP4 homolog from Caenorhabditis elegans.